A 399-amino-acid chain; its full sequence is Carbamoyl phosphate synthase small chain (399 aa).

A CPSase region spans residues 1-204 (MTKTTLSSDP…WNKGYTINNE (204 aa)). L-glutamine-binding residues include serine 60, glycine 256, and glycine 258. A Glutamine amidotransferase type-1 domain is found at 208-396 (HIVAIDYGIK…HDLIVNYREQ (189 aa)). Catalysis depends on cysteine 285, which acts as the Nucleophile. Leucine 286, glutamine 289, asparagine 327, glycine 329, and phenylalanine 330 together coordinate L-glutamine. Residues histidine 369 and glutamate 371 contribute to the active site.

This sequence belongs to the CarA family. Composed of two chains; the small (or glutamine) chain promotes the hydrolysis of glutamine to ammonia, which is used by the large (or ammonia) chain to synthesize carbamoyl phosphate. Tetramer of heterodimers (alpha,beta)4.

It catalyses the reaction hydrogencarbonate + L-glutamine + 2 ATP + H2O = carbamoyl phosphate + L-glutamate + 2 ADP + phosphate + 2 H(+). It carries out the reaction L-glutamine + H2O = L-glutamate + NH4(+). The protein operates within amino-acid biosynthesis; L-arginine biosynthesis; carbamoyl phosphate from bicarbonate: step 1/1. It participates in pyrimidine metabolism; UMP biosynthesis via de novo pathway; (S)-dihydroorotate from bicarbonate: step 1/3. Its function is as follows. Small subunit of the glutamine-dependent carbamoyl phosphate synthetase (CPSase). CPSase catalyzes the formation of carbamoyl phosphate from the ammonia moiety of glutamine, carbonate, and phosphate donated by ATP, constituting the first step of 2 biosynthetic pathways, one leading to arginine and/or urea and the other to pyrimidine nucleotides. The small subunit (glutamine amidotransferase) binds and cleaves glutamine to supply the large subunit with the substrate ammonia. This Bartonella bacilliformis (strain ATCC 35685 / KC583 / Herrer 020/F12,63) protein is Carbamoyl phosphate synthase small chain.